The following is a 512-amino-acid chain: CaM kinase-like vesicle-associated protein (512 aa).

Residues Y24–I286 form the Protein kinase domain. Residues A328 to G347 form a disordered region. A compositionally biased stretch (low complexity) spans S332–G347. Position 392 is a phosphoserine (S392). Residues A393–S512 are disordered. The segment covering T398–P439 has biased composition (polar residues). Position 446 is a phosphothreonine (T446). Over residues T449 to S460 the composition is skewed to polar residues. Low complexity predominate over residues A461–P478. Phosphothreonine is present on T470.

This sequence belongs to the protein kinase superfamily. CAMK Ser/Thr protein kinase family. As to quaternary structure, interacts with calmodulin, in the presence of calcium. Ca(2+) serves as cofactor.

The protein localises to the cell membrane. It localises to the cytoplasmic vesicle membrane. Does not appear to have detectable kinase activity. The protein is CaM kinase-like vesicle-associated protein (Camkv) of Mus musculus (Mouse).